The sequence spans 172 residues: Adenine phosphoribosyltransferase (172 aa).

It belongs to the purine/pyrimidine phosphoribosyltransferase family. In terms of assembly, homodimer.

It localises to the cytoplasm. The enzyme catalyses AMP + diphosphate = 5-phospho-alpha-D-ribose 1-diphosphate + adenine. Its pathway is purine metabolism; AMP biosynthesis via salvage pathway; AMP from adenine: step 1/1. Functionally, catalyzes a salvage reaction resulting in the formation of AMP, that is energically less costly than de novo synthesis. In Picosynechococcus sp. (strain ATCC 27264 / PCC 7002 / PR-6) (Agmenellum quadruplicatum), this protein is Adenine phosphoribosyltransferase.